Reading from the N-terminus, the 739-residue chain is Phosphoribosylformylglycinamidine synthase subunit PurL (739 aa).

Residue His54 is part of the active site. Tyr57 and Lys96 together coordinate ATP. Glu98 is a Mg(2+) binding site. Substrate contacts are provided by residues 99-102 (SHNH) and Arg121. His100 serves as the catalytic Proton acceptor. A Mg(2+)-binding site is contributed by Asp122. Gln245 lines the substrate pocket. Asp273 is a Mg(2+) binding site. Residue 317 to 319 (ESQ) coordinates substrate. Positions 500 and 537 each coordinate ATP. Asn538 contacts Mg(2+). Residue Ser540 coordinates substrate.

The protein belongs to the FGAMS family. In terms of assembly, monomer. Part of the FGAM synthase complex composed of 1 PurL, 1 PurQ and 2 PurS subunits.

The protein localises to the cytoplasm. It catalyses the reaction N(2)-formyl-N(1)-(5-phospho-beta-D-ribosyl)glycinamide + L-glutamine + ATP + H2O = 2-formamido-N(1)-(5-O-phospho-beta-D-ribosyl)acetamidine + L-glutamate + ADP + phosphate + H(+). It functions in the pathway purine metabolism; IMP biosynthesis via de novo pathway; 5-amino-1-(5-phospho-D-ribosyl)imidazole from N(2)-formyl-N(1)-(5-phospho-D-ribosyl)glycinamide: step 1/2. Functionally, part of the phosphoribosylformylglycinamidine synthase complex involved in the purines biosynthetic pathway. Catalyzes the ATP-dependent conversion of formylglycinamide ribonucleotide (FGAR) and glutamine to yield formylglycinamidine ribonucleotide (FGAM) and glutamate. The FGAM synthase complex is composed of three subunits. PurQ produces an ammonia molecule by converting glutamine to glutamate. PurL transfers the ammonia molecule to FGAR to form FGAM in an ATP-dependent manner. PurS interacts with PurQ and PurL and is thought to assist in the transfer of the ammonia molecule from PurQ to PurL. This is Phosphoribosylformylglycinamidine synthase subunit PurL from Bacillus cereus (strain ATCC 10987 / NRS 248).